We begin with the raw amino-acid sequence, 82 residues long: UPF0154 protein SMU_1719c (82 aa).

The helical transmembrane segment at Phe4–Ile24 threads the bilayer.

It belongs to the UPF0154 family.

It localises to the membrane. This chain is UPF0154 protein SMU_1719c, found in Streptococcus mutans serotype c (strain ATCC 700610 / UA159).